The chain runs to 176 residues: ATP-dependent protease subunit HslV (176 aa).

Residue threonine 4 is part of the active site. Positions 158, 161, and 164 each coordinate Na(+).

Belongs to the peptidase T1B family. HslV subfamily. A double ring-shaped homohexamer of HslV is capped on each side by a ring-shaped HslU homohexamer. The assembly of the HslU/HslV complex is dependent on binding of ATP.

It localises to the cytoplasm. It catalyses the reaction ATP-dependent cleavage of peptide bonds with broad specificity.. Its activity is regulated as follows. Allosterically activated by HslU binding. Functionally, protease subunit of a proteasome-like degradation complex believed to be a general protein degrading machinery. This is ATP-dependent protease subunit HslV from Rhizobium meliloti (strain 1021) (Ensifer meliloti).